The chain runs to 154 residues: uncharacterized protein (154 aa).

2 disordered regions span residues 23–63 (ERVG…VVLK) and 79–154 (IKAA…DENE). Residues 43-56 (PDEDGDHSDKEDEQ) show a composition bias toward acidic residues. Residue Ser-50 is modified to Phosphoserine. Lys-108 is modified (N6-acetyllysine). Ser-146 is modified (phosphoserine).

This is an uncharacterized protein from Homo sapiens (Human).